The primary structure comprises 2254 residues: Acetyl-CoA carboxylase 1 (2254 aa).

Residues 36–543 form the Biotin carboxylation domain; sequence PIHSILIANN…HTGWLDSRIA (508 aa). One can recognise an ATP-grasp domain in the interval 189-381; the sequence is NSNLVTIPEE…LPAAQVAVGM (193 aa). 215–272 contacts ATP; the sequence is CQVVGYPAMIKASWGGGGKGIRKVHNDDEVRALFKQVQGEVPGSPIFIMKVASQSRHL. The Mg(2+) site is built by glutamate 338, glutamate 352, and asparagine 354. Mn(2+) contacts are provided by glutamate 338, glutamate 352, and asparagine 354. Arginine 356 is a catalytic residue. The 75-residue stretch at 670-744 folds into the Biotinyl-binding domain; that stretch reads LQNDHDPSKL…QAGELIANLD (75 aa). At lysine 711 the chain carries N6-biotinyllysine. Threonine 1031 carries the post-translational modification Phosphothreonine. Position 1192 is a phosphoserine (serine 1192). The CoA carboxyltransferase N-terminal domain maps to 1492–1831; it reads QYKPLGYLDR…YVGGPLPVLA (340 aa). The tract at residues 1492–2150 is carboxyltransferase; that stretch reads QYKPLGYLDR…ESSLVKNVRE (659 aa). 3 residues coordinate CoA: arginine 1740, lysine 2041, and arginine 2043. Residues 1835 to 2150 form the CoA carboxyltransferase C-terminal domain; that stretch reads PPERIVEYVP…ESSLVKNVRE (316 aa).

In terms of assembly, homodimer. Biotin is required as a cofactor. Requires Mg(2+) as cofactor. Mn(2+) serves as cofactor. As to expression, expressed in roots, trichomes, epidermal leaf cells, siliques, petals, anthers, and seeds.

It localises to the cytoplasm. The protein resides in the cytosol. The catalysed reaction is hydrogencarbonate + acetyl-CoA + ATP = malonyl-CoA + ADP + phosphate + H(+). It carries out the reaction N(6)-biotinyl-L-lysyl-[protein] + hydrogencarbonate + ATP = N(6)-carboxybiotinyl-L-lysyl-[protein] + ADP + phosphate + H(+). It participates in lipid metabolism; malonyl-CoA biosynthesis; malonyl-CoA from acetyl-CoA: step 1/1. Multifunctional enzyme that catalyzes the carboxylation of acetyl-CoA, forming malonyl-CoA, which is used in the plastid for fatty acid synthesis and in the cytosol in various biosynthetic pathways including fatty acid elongation. Required for very long chain fatty acids elongation. Necessary for embryo and plant development. Plays a central function in embryo morphogenesis, especially in apical meristem development. Involved in cell proliferation and tissue patterning. May act as a repressor of cytokinin response. The protein is Acetyl-CoA carboxylase 1 (ACC1) of Arabidopsis thaliana (Mouse-ear cress).